A 152-amino-acid polypeptide reads, in one-letter code: D-erythrulose-4-phosphate isomerase 2 (152 aa).

Catalysis depends on cysteine 70, which acts as the Proton acceptor.

The protein belongs to the LacAB/RpiB family.

It carries out the reaction D-erythrulose 4-phosphate = D-erythrose 4-phosphate. It functions in the pathway carbohydrate metabolism; erythritol degradation. The protein operates within carbohydrate metabolism; D-threitol degradation. Its pathway is carbohydrate metabolism; L-threitol degradation. Functionally, catalyzes the isomerization of D-erythrulose-4P to D-erythrose-4P. Involved in the degradation pathways of L-threitol, D-threitol and erythritol, that allow M.smegmatis to grow on these compounds as the sole carbon source. The protein is D-erythrulose-4-phosphate isomerase 2 of Mycolicibacterium smegmatis (strain ATCC 700084 / mc(2)155) (Mycobacterium smegmatis).